The primary structure comprises 198 residues: Segregation and condensation protein B (198 aa).

Residues 167-198 (PKLADPEADDPDQNEMDLFFDRFNQSKEQEEE) are disordered. The segment covering 172-181 (PEADDPDQNE) has biased composition (acidic residues).

It belongs to the ScpB family. As to quaternary structure, homodimer. Homodimerization may be required to stabilize the binding of ScpA to the Smc head domains. Component of a cohesin-like complex composed of ScpA, ScpB and the Smc homodimer, in which ScpA and ScpB bind to the head domain of Smc. The presence of the three proteins is required for the association of the complex with DNA.

The protein resides in the cytoplasm. In terms of biological role, participates in chromosomal partition during cell division. May act via the formation of a condensin-like complex containing Smc and ScpA that pull DNA away from mid-cell into both cell halves. This is Segregation and condensation protein B from Listeria welshimeri serovar 6b (strain ATCC 35897 / DSM 20650 / CCUG 15529 / CIP 8149 / NCTC 11857 / SLCC 5334 / V8).